We begin with the raw amino-acid sequence, 199 residues long: Recombination protein RecR (199 aa).

Residues 56-71 (CAICGNVAEHEQCRIC) form a C4-type zinc finger. A Toprim domain is found at 79-174 (TVLCVVEEPK…RVTRLASGLP (96 aa)).

This sequence belongs to the RecR family.

Its function is as follows. May play a role in DNA repair. It seems to be involved in an RecBC-independent recombinational process of DNA repair. It may act with RecF and RecO. In Acidothermus cellulolyticus (strain ATCC 43068 / DSM 8971 / 11B), this protein is Recombination protein RecR.